Reading from the N-terminus, the 269-residue chain is uncharacterized protein (269 aa).

103 to 110 (GIFTMGKS) provides a ligand contact to ATP.

This is an uncharacterized protein from Mycoplasma pneumoniae (strain ATCC 29342 / M129 / Subtype 1) (Mycoplasmoides pneumoniae).